Reading from the N-terminus, the 564-residue chain is Forkhead transcription factor HCM1 (564 aa).

The segment at 33-80 is disordered; it reads DEKEMITPPSSTVRKTMKEVNKRPSHPLSPDHSSPIAPSKAKRQRSDT. The segment covering 58–67 has biased composition (low complexity); the sequence is HPLSPDHSSP. Positions 108–199 form a DNA-binding region, fork-head; that stretch reads KKPPYSYATL…KFFKGENRGY (92 aa). The span at 224–241 shows a compositional bias: acidic residues; it reads QVESGEGNDDLPDEEERE. A disordered region spans residues 224-246; that stretch reads QVESGEGNDDLPDEEEREEAGKF. Phosphothreonine is present on threonine 342. The segment at 401–448 is disordered; the sequence is SKPQSQQSYSNSQLPPPPSSHGSDLLKTPKMRHSDGLEKTPSRLISTP. The span at 402–413 shows a compositional bias: polar residues; it reads KPQSQQSYSNSQ. Positions 432-441 are enriched in basic and acidic residues; it reads RHSDGLEKTP. Position 496 is a phosphoserine (serine 496). The interval 536–564 is disordered; it reads SDGNNTTDSNQKHHPYHNHPSNDSGNEKN. Positions 554–564 are enriched in polar residues; it reads HPSNDSGNEKN.

Post-translationally, phosphorylated by CDK1.

It is found in the cytoplasm. Its subcellular location is the nucleus. In terms of biological role, transcription factor regulating the cell cycle specific transcription of a spindle pole body (SPB) calmodulin binding protein SPC110. Required for full induction of SPC110 transcription in late G1. Binds to DNA consensus sequence 5'-[AT]AA[TC]AAACAA[AT]-3'. Dosage dependent suppressor of calmodulin mutants which have specific defects in SPB assembly. This chain is Forkhead transcription factor HCM1 (HCM1), found in Saccharomyces cerevisiae (strain ATCC 204508 / S288c) (Baker's yeast).